A 321-amino-acid polypeptide reads, in one-letter code: Probable pectate lyase A (321 aa).

An N-terminal signal peptide occupies residues 1–18 (MKFVATLIACGLSGLALA). A glycan (N-linked (GlcNAc...) asparagine) is linked at Asn-93. Ca(2+) contacts are provided by Asp-134, Asp-163, and Asp-167. Arg-220 is an active-site residue. Asn-238 is a glycosylation site (N-linked (GlcNAc...) asparagine).

This sequence belongs to the polysaccharide lyase 1 family. It depends on Ca(2+) as a cofactor.

It localises to the secreted. It catalyses the reaction Eliminative cleavage of (1-&gt;4)-alpha-D-galacturonan to give oligosaccharides with 4-deoxy-alpha-D-galact-4-enuronosyl groups at their non-reducing ends.. Its function is as follows. Pectinolytic enzyme consist of four classes of enzymes: pectin lyase, polygalacturonase, pectin methylesterase and rhamnogalacturonase. Among pectinolytic enzymes, pectin lyase is the most important in depolymerization of pectin, since it cleaves internal glycosidic bonds of highly methylated pectins. Favors pectate, the anion, over pectin, the methyl ester. The sequence is that of Probable pectate lyase A (plyA) from Aspergillus fumigatus (strain CBS 144.89 / FGSC A1163 / CEA10) (Neosartorya fumigata).